The primary structure comprises 249 residues: Aquaporin TIP4-1 (249 aa).

M1 is subject to N-acetylmethionine. Topologically, residues 1-20 are cytoplasmic; that stretch reads MKKIELGHHSEAAKPDCIKA. K3 is modified (N6,N6-dimethyllysine). A helical transmembrane segment spans residues 21 to 41; that stretch reads LIVEFITTFLFVFAGVGSAMA. Topologically, residues 42–49 are vacuolar; it reads TDSLVGNT. The chain crosses the membrane as a helical span at residues 50–70; it reads LVGLFAVAVAHAFVVAVMISA. The Cytoplasmic portion of the chain corresponds to 71 to 105; sequence GHISGGHLNPAVTLGLLLGGHISVFRAFLYWIDQL. Positions 79–81 match the NPA 1 motif; the sequence is NPA. The helical transmembrane segment at 106–126 threads the bilayer; sequence LASSAACFLLSYLTGGMGTPV. Residues 127 to 137 are Vacuolar-facing; sequence HTLASGVSYTQ. The chain crosses the membrane as a helical span at residues 138–158; sequence GIIWEIILTFSLLFTVYATIV. The Cytoplasmic segment spans residues 159–166; it reads DPKKGSLD. A helical transmembrane segment spans residues 167 to 187; sequence GFGPLLTGFVVGANILAGGAF. At 188-212 the chain is on the vacuolar side; sequence SGASMNPARSFGPALVSGNWTDHWV. The NPA 2 motif lies at 193–195; it reads NPA. A helical membrane pass occupies residues 213 to 233; it reads YWVGPLIGGGLAGFIYENVLI. Residues 234–249 lie on the Cytoplasmic side of the membrane; sequence DRPHVPVADDEQPLLN.

It belongs to the MIP/aquaporin (TC 1.A.8) family. TIP (TC 1.A.8.10) subfamily. In terms of tissue distribution, expressed in roots.

Its subcellular location is the vacuole membrane. Functionally, aquaporins facilitate the transport of water and small neutral solutes across cell membranes. Transports urea in yeast cells in a pH-independent manner. In Arabidopsis thaliana (Mouse-ear cress), this protein is Aquaporin TIP4-1 (TIP4-1).